An 858-amino-acid chain; its full sequence is Bifunctional uridylyltransferase/uridylyl-removing enzyme (858 aa).

Residues 1–324 (MSAHAAPSPE…PATSGITRVL (324 aa)) are uridylyltransferase. Residues 325–681 (SPDRFVEKQG…ARPSPIGDAL (357 aa)) form a uridylyl-removing region. The region spanning 443–565 (VDQHILMVLR…VGNERYLTAL (123 aa)) is the HD domain. ACT domains follow at residues 682 to 761 (QVLV…PEPS) and 790 to 858 (ILSV…AIAV).

The protein belongs to the GlnD family. Requires Mg(2+) as cofactor.

The catalysed reaction is [protein-PII]-L-tyrosine + UTP = [protein-PII]-uridylyl-L-tyrosine + diphosphate. It carries out the reaction [protein-PII]-uridylyl-L-tyrosine + H2O = [protein-PII]-L-tyrosine + UMP + H(+). With respect to regulation, uridylyltransferase (UTase) activity is inhibited by glutamine, while glutamine activates uridylyl-removing (UR) activity. Its function is as follows. Modifies, by uridylylation and deuridylylation, the PII regulatory proteins (GlnB and homologs), in response to the nitrogen status of the cell that GlnD senses through the glutamine level. Under low glutamine levels, catalyzes the conversion of the PII proteins and UTP to PII-UMP and PPi, while under higher glutamine levels, GlnD hydrolyzes PII-UMP to PII and UMP (deuridylylation). Thus, controls uridylylation state and activity of the PII proteins, and plays an important role in the regulation of nitrogen fixation and metabolism. The chain is Bifunctional uridylyltransferase/uridylyl-removing enzyme from Burkholderia lata (strain ATCC 17760 / DSM 23089 / LMG 22485 / NCIMB 9086 / R18194 / 383).